A 440-amino-acid chain; its full sequence is Asparagine--tRNA ligase (440 aa).

It belongs to the class-II aminoacyl-tRNA synthetase family. In terms of assembly, homodimer.

Its subcellular location is the cytoplasm. It catalyses the reaction tRNA(Asn) + L-asparagine + ATP = L-asparaginyl-tRNA(Asn) + AMP + diphosphate + H(+). In Roseiflexus sp. (strain RS-1), this protein is Asparagine--tRNA ligase.